Consider the following 209-residue polypeptide: Large ribosomal subunit protein uL3 (209 aa).

The interval 128-166 is disordered; sequence FGGGSRTHGQSDRLRAPGSVGGSSDPSRTFKGTRMAGRM.

Belongs to the universal ribosomal protein uL3 family. Part of the 50S ribosomal subunit. Forms a cluster with proteins L14 and L19.

Functionally, one of the primary rRNA binding proteins, it binds directly near the 3'-end of the 23S rRNA, where it nucleates assembly of the 50S subunit. The protein is Large ribosomal subunit protein uL3 of Chlorobaculum parvum (strain DSM 263 / NCIMB 8327) (Chlorobium vibrioforme subsp. thiosulfatophilum).